Consider the following 116-residue polypeptide: NADH-ubiquinone oxidoreductase chain 3 (116 aa).

A run of 3 helical transmembrane segments spans residues 3–23 (LITT…TISF), 56–76 (FFLI…LLPL), and 85–105 (PALT…GLIY).

Belongs to the complex I subunit 3 family.

It is found in the mitochondrion membrane. The enzyme catalyses a ubiquinone + NADH + 5 H(+)(in) = a ubiquinol + NAD(+) + 4 H(+)(out). Functionally, core subunit of the mitochondrial membrane respiratory chain NADH dehydrogenase (Complex I) that is believed to belong to the minimal assembly required for catalysis. Complex I functions in the transfer of electrons from NADH to the respiratory chain. The immediate electron acceptor for the enzyme is believed to be ubiquinone. This Oncorhynchus masou (Cherry salmon) protein is NADH-ubiquinone oxidoreductase chain 3 (MT-ND3).